Here is a 277-residue protein sequence, read N- to C-terminus: NADPH-dependent 7-cyano-7-deazaguanine reductase (277 aa).

A substrate-binding site is contributed by Ile-86 to Ser-88. NADPH is bound at residue Ser-88–Lys-89. Cys-184 (thioimide intermediate) is an active-site residue. Residue Asp-191 is the Proton donor of the active site. His-223–Glu-224 serves as a coordination point for substrate. Arg-252 to Gly-253 contacts NADPH.

It belongs to the GTP cyclohydrolase I family. QueF type 2 subfamily. In terms of assembly, homodimer.

It is found in the cytoplasm. The catalysed reaction is 7-aminomethyl-7-carbaguanine + 2 NADP(+) = 7-cyano-7-deazaguanine + 2 NADPH + 3 H(+). It functions in the pathway tRNA modification; tRNA-queuosine biosynthesis. In terms of biological role, catalyzes the NADPH-dependent reduction of 7-cyano-7-deazaguanine (preQ0) to 7-aminomethyl-7-deazaguanine (preQ1). This chain is NADPH-dependent 7-cyano-7-deazaguanine reductase, found in Chromohalobacter salexigens (strain ATCC BAA-138 / DSM 3043 / CIP 106854 / NCIMB 13768 / 1H11).